Consider the following 777-residue polypeptide: Ribosome-releasing factor 2, mitochondrial (777 aa).

The region spanning 68–353 is the tr-type G domain; sequence AKIRNIGIMA…AVTMYLPSPE (286 aa). Residues 77 to 84, 141 to 145, and 195 to 198 each bind GTP; these read AHIDAGKT, DTPGH, and NKMD.

The protein belongs to the TRAFAC class translation factor GTPase superfamily. Classic translation factor GTPase family. EF-G/EF-2 subfamily.

It is found in the mitochondrion. It catalyses the reaction GTP + H2O = GDP + phosphate + H(+). Its function is as follows. Mitochondrial GTPase that mediates the disassembly of ribosomes from messenger RNA at the termination of mitochondrial protein biosynthesis. Acts in collaboration with MRRF. GTP hydrolysis follows the ribosome disassembly and probably occurs on the ribosome large subunit. Not involved in the GTP-dependent ribosomal translocation step during translation elongation. In Pongo abelii (Sumatran orangutan), this protein is Ribosome-releasing factor 2, mitochondrial.